A 427-amino-acid polypeptide reads, in one-letter code: 5-hydroxybenzimidazole synthase BzaB (427 aa).

Belongs to the ThiC family. 5-hydroxybenzimidazole synthase subfamily. The cofactor is [4Fe-4S] cluster.

It carries out the reaction 5-amino-1-(5-phospho-beta-D-ribosyl)imidazole + AH2 + S-adenosyl-L-methionine = 5-hydroxybenzimidazole + 5'-deoxyadenosine + formate + L-methionine + A + NH4(+) + phosphate + 2 H(+). Its pathway is cofactor biosynthesis; adenosylcobalamin biosynthesis. In terms of biological role, together with BzaA, catalyzes the conversion of aminoimidazole ribotide (AIR) to 5-hydroxybenzimidazole (5-HBI) in a radical S-adenosyl-L-methionine (SAM)-dependent reaction. Is thus involved in the anaerobic biosynthesis of dimethylbenzimidazole (DMB), the lower axial ligand of vitamin B12 (cobalamin). Requires BzaA for catalytic activity, as BzaB alone displays no activity. This is 5-hydroxybenzimidazole synthase BzaB from Eubacterium limosum.